The sequence spans 275 residues: Aliphatic sulfonates import ATP-binding protein SsuB 1 (275 aa).

The ABC transporter domain occupies 34–260 (ISLTGLEKSF…RHGHPGLCEL (227 aa)). 66–73 (GKSGCGKS) provides a ligand contact to ATP.

The protein belongs to the ABC transporter superfamily. Aliphatic sulfonates importer (TC 3.A.1.17.2) family. The complex is composed of two ATP-binding proteins (SsuB), two transmembrane proteins (SsuC) and a solute-binding protein (SsuA).

It localises to the cell inner membrane. It catalyses the reaction ATP + H2O + aliphatic sulfonate-[sulfonate-binding protein]Side 1 = ADP + phosphate + aliphatic sulfonateSide 2 + [sulfonate-binding protein]Side 1.. Functionally, part of the ABC transporter complex SsuABC involved in aliphatic sulfonates import. Responsible for energy coupling to the transport system. This is Aliphatic sulfonates import ATP-binding protein SsuB 1 from Rhizobium johnstonii (strain DSM 114642 / LMG 32736 / 3841) (Rhizobium leguminosarum bv. viciae).